The primary structure comprises 316 residues: Cuticle collagen 12 (316 aa).

The signal sequence occupies residues 1–36 (MTEDPKQIAQETESLRKVAFFGIAVSTIATLTAIIA). Low complexity-rich tracts occupy residues 127 to 157 (SGAA…PGQD) and 183 to 204 (APGQ…GAAL). The interval 127–316 (SGAAGPAGSP…CPPPRTAPGY (190 aa)) is disordered. Triple-helical region regions lie at residues 128 to 157 (GAAG…PGQD), 176 to 202 (GPPG…SGGA), 206 to 235 (GPPG…PGQV), 240 to 266 (GTPG…AGSS), and 269 to 304 (GGPG…EGAC). Over residues 205-217 (PGPPGPAGPPGPA) the composition is skewed to pro residues. Residues 219-234 (QPGSNGNAGAPGAPGQ) show a composition bias toward low complexity. Over residues 241 to 251 (TPGPAGPPGSP) the composition is skewed to pro residues. Composition is skewed to low complexity over residues 256-266 (APGQPGQAGSS) and 276-295 (DAGA…PGQD). Over residues 307-316 (CPPPRTAPGY) the composition is skewed to pro residues.

This sequence belongs to the cuticular collagen family. Collagen polypeptide chains are complexed within the cuticle by disulfide bonds and other types of covalent cross-links.

Nematode cuticles are composed largely of collagen-like proteins. The cuticle functions both as an exoskeleton and as a barrier to protect the worm from its environment. In Caenorhabditis elegans, this protein is Cuticle collagen 12 (col-12).